The following is a 159-amino-acid chain: RxLR effector protein 24 (159 aa).

The N-terminal stretch at 1–18 is a signal peptide; it reads MRFLVWVFFVGLVTFVSG. The RxLR-dEER motif lies at 58–82; the sequence is RFLRSNANQDLTTANDDSDVKEEER. The segment at 109–159 is RABA-binding domain; that stretch reads EKAFQHMMKQGETPTSLAKRLEIGGAAELRYEKVYEKYTAWWINYHTVAGT.

It belongs to the RxLR effector family. Interacts with potato RABA GTPases including RABA1a, RABA2a and RABA4a.

Its subcellular location is the secreted. It is found in the host cell membrane. The protein localises to the host endomembrane system. Functionally, effector protein that contributes to pathogen virulence. Targets members of the RABA GTPases subfamily to inhibit vesicular secretion, leading to an accumulation of secretory proteins in the endoplasmic reticulum. This chain is RxLR effector protein 24, found in Phytophthora infestans (strain T30-4) (Potato late blight agent).